The following is a 458-amino-acid chain: MTDDMTKDNINQQTLQRGLKNRHIQLIAIGGAIGTGLFLGSGKSIHFAGPSILFAYMITGIICFLIMRSLGELLLSNLNYHSFVDFVQDYLGDMAAFITGWTYWFCWISIAMADLTAVGLYTQYWLPGVPQWVPGLIALIILLIMNLATVKLFGELEFWFALIKVIAILALIVIGLVMIFKGFSTSSGVSSFTNLWSHGGLFPNGMHGFILSFQMVVFAFVGIELVGLTAGETENPEKVIPKAINNIPVRVLLFYIGALLVIMSIYPWDIINPSESPFVQVFVAVGIVGAASIINFVVLTSAASACNSAVFSTSRMVYSLAKDHNAPESMAKLTQRKVPRNALFFSAIVILIGVTLNYIMPEGVFTLITSISTVCFIYIWGITVICHMKYRKTRPELAKTNKFKLPLYPFTNYLILAFLAFVLVVLALAQDTRVSLFVTPVWFILLIVIYKVRKAKHQ.

The next 12 helical transmembrane spans lie at 26 to 46 (LIAI…KSIH), 47 to 67 (FAGP…FLIM), 95 to 115 (AAFI…MADL), 125 to 145 (WLPG…LLIM), 160 to 180 (FALI…VMIF), 208 to 228 (GFIL…LVGL), 251 to 271 (VLLF…WDII), 278 to 298 (FVQV…NFVV), 342 to 362 (ALFF…IMPE), 365 to 385 (FTLI…ITVI), 409 to 429 (PFTN…LALA), and 432 to 452 (TRVS…IYKV).

Belongs to the amino acid-polyamine-organocation (APC) superfamily.

The protein localises to the cell membrane. Functionally, probable amino-acid or metabolite transport protein. This is an uncharacterized protein from Bacillus subtilis (strain 168).